A 397-amino-acid polypeptide reads, in one-letter code: 8-amino-7-oxononanoate synthase (397 aa).

Arg-23 lines the substrate pocket. 110–111 (GY) provides a ligand contact to pyridoxal 5'-phosphate. Residue His-135 participates in substrate binding. The pyridoxal 5'-phosphate site is built by Ser-181, His-209, and Thr-237. Lys-240 bears the N6-(pyridoxal phosphate)lysine mark. Thr-354 contacts substrate.

Belongs to the class-II pyridoxal-phosphate-dependent aminotransferase family. BioF subfamily. As to quaternary structure, homodimer. The cofactor is pyridoxal 5'-phosphate.

The enzyme catalyses 6-carboxyhexanoyl-[ACP] + L-alanine + H(+) = (8S)-8-amino-7-oxononanoate + holo-[ACP] + CO2. It participates in cofactor biosynthesis; biotin biosynthesis. Its function is as follows. Catalyzes the decarboxylative condensation of pimeloyl-[acyl-carrier protein] and L-alanine to produce 8-amino-7-oxononanoate (AON), [acyl-carrier protein], and carbon dioxide. This is 8-amino-7-oxononanoate synthase from Anaeromyxobacter dehalogenans (strain 2CP-C).